Consider the following 36-residue polypeptide: Glucagon-2 (36 aa).

The protein belongs to the glucagon family.

It localises to the secreted. In terms of biological role, glucagon plays a key role in glucose metabolism and homeostasis. Regulates blood glucose by increasing gluconeogenesis and decreasing glycolysis. The protein is Glucagon-2 of Huso dauricus (Kaluga sturgeon).